The primary structure comprises 179 residues: Pectinesterase inhibitor 5 (179 aa).

The N-terminal stretch at 1–25 (MATMLINHMLFLTSLLIVVFPVANA) is a signal peptide. 2 cysteine pairs are disulfide-bonded: C35–C44 and C101–C141.

Belongs to the PMEI family. In terms of tissue distribution, expressed in seeds, buds, and mature flowers.

The protein resides in the secreted. Its subcellular location is the extracellular space. It is found in the apoplast. Functionally, pectin methylesterase (PME) inhibitor that targets PME from seeds and modulates PME activity and pectin methylesterification during seed germination. The sequence is that of Pectinesterase inhibitor 5 from Arabidopsis thaliana (Mouse-ear cress).